A 181-amino-acid chain; its full sequence is Large ribosomal subunit protein uL5 (181 aa).

The protein belongs to the universal ribosomal protein uL5 family. As to quaternary structure, part of the 50S ribosomal subunit; part of the 5S rRNA/L5/L18/L25 subcomplex. Contacts the 5S rRNA and the P site tRNA. Forms a bridge to the 30S subunit in the 70S ribosome.

This is one of the proteins that bind and probably mediate the attachment of the 5S RNA into the large ribosomal subunit, where it forms part of the central protuberance. In the 70S ribosome it contacts protein S13 of the 30S subunit (bridge B1b), connecting the 2 subunits; this bridge is implicated in subunit movement. Contacts the P site tRNA; the 5S rRNA and some of its associated proteins might help stabilize positioning of ribosome-bound tRNAs. This Aster yellows witches'-broom phytoplasma (strain AYWB) protein is Large ribosomal subunit protein uL5.